The following is a 777-amino-acid chain: Ethylene receptor 4 (777 aa).

The next 3 helical transmembrane spans lie at 49-69, 77-97, and 113-133; these read LLIA…ATCA, AVLH…LAAF, and AAKV…LTFI. Positions 88 and 92 each coordinate Cu cation. The GAF domain maps to 184-344; sequence DAHAILRTTA…VVADQAAVAL (161 aa). Positions 387–521 constitute a Histidine kinase domain; sequence AMCHAMRRPV…NTGSGACRLS (135 aa). Histidine 390 carries the post-translational modification Phosphohistidine; by autocatalysis. Positions 645-774 constitute a Response regulatory domain; sequence RVLLADDDAM…ALGAQLCRVL (130 aa). Aspartate 696 bears the 4-aspartylphosphate mark.

It belongs to the ethylene receptor family. It depends on Cu cation as a cofactor.

The protein localises to the endoplasmic reticulum membrane. The enzyme catalyses ATP + protein L-histidine = ADP + protein N-phospho-L-histidine.. Ethylene receptor related to bacterial two-component regulators. Acts as a redundant negative regulator of ethylene signaling. This chain is Ethylene receptor 4 (ETR4), found in Oryza sativa subsp. japonica (Rice).